We begin with the raw amino-acid sequence, 75 residues long: Caerin 1.11 (75 aa).

The N-terminal stretch at 1-22 (MASLKKSLFLVLFLGFVSVSIC) is a signal peptide. A propeptide spanning residues 23 to 49 (EEEKRQEDEDEHEEEGENQEEGSEEKR) is cleaved from the precursor. Residues 24–48 (EEKRQEDEDEHEEEGENQEEGSEEK) are disordered. A compositionally biased stretch (acidic residues) spans 30-45 (DEDEHEEEGENQEEGS). Position 74 is a leucine amide (Leu-74).

It belongs to the frog skin active peptide (FSAP) family. Caerin subfamily. As to expression, expressed by the skin glands.

It localises to the secreted. It is found in the target cell membrane. In terms of biological role, cationic amphipathic alpha-helical antimicrobial peptide with weak or no activity against both Gram-positive and Gram-negative bacteria. Is weakly active against E.coli (MIC=25 uM), E.cloacae (MIC=50 uM), K.pneumoniae (MIC=25 uM), and S.haemolyticus (MIC=50 uM). Has no activity against S.typhimurium, S.enteritidis, B.megaterium, and S.aureus (MIC&gt;100 uM). In Ranoidea caerulea (Green tree frog), this protein is Caerin 1.11.